A 356-amino-acid chain; its full sequence is uncharacterized protein (356 aa).

The next 6 helical transmembrane spans lie at 2–22, 36–56, 77–97, 99–119, 124–144, and 154–174; these read FEAIIYNISVTVAGIYLFHRL, YVTVLMTIVALLLSAYPVPIF, MFYTVLSAFIVGLVNVLIGDY, IITAMIFIVIAGIIGAIGPFL, IISLQILNVIALVIFAILSLI, and LFLIPISFVLTITSSITFVDI. Residues 218 to 353 enclose the GGDEF domain; the sequence is QSLGLLLIDI…GRNQVMFNPI (136 aa).

It localises to the cell membrane. This is an uncharacterized protein from Staphylococcus saprophyticus subsp. saprophyticus (strain ATCC 15305 / DSM 20229 / NCIMB 8711 / NCTC 7292 / S-41).